A 681-amino-acid polypeptide reads, in one-letter code: Anaphase-promoting complex subunit 2 (681 aa).

Belongs to the cullin family. As to quaternary structure, the APC/C is composed of at least 13 subunits: apc1, apc2, nuc2, apc4, apc5, cut9, apc8, apc10, apc11, hcn1, apc13, apc14 and apc15.

Component of the anaphase-promoting complex/cyclosome (APC/C), a cell cycle-regulated E3 ubiquitin-protein ligase complex that controls progression through mitosis and the G1 phase of the cell cycle. The APC/C is thought to confer substrate specificity and, in the presence of ubiquitin-conjugating E2 enzymes, it catalyzes the formation of protein-ubiquitin conjugates that are subsequently degraded by the 26S proteasome. The sequence is that of Anaphase-promoting complex subunit 2 (apc2) from Schizosaccharomyces pombe (strain 972 / ATCC 24843) (Fission yeast).